The chain runs to 457 residues: 6-phosphofructo-2-kinase/fructose-2,6-bisphosphatase (457 aa).

Residues 1-20 (MEIPPGLETTKRKVAHSDEH) are disordered. Positions 1–244 (MEIPPGLETT…VYFLMNIHLL (244 aa)) are 6-phosphofructo-2-kinase. Over residues 9-20 (TTKRKVAHSDEH) the composition is skewed to basic and acidic residues. 36 to 44 (GLPARGKTY) lines the ATP pocket. Residues Arg69 and Arg98 each contribute to the beta-D-fructose 6-phosphate site. Asp124 is an active-site residue. Residues Thr126 and Arg132 each coordinate beta-D-fructose 6-phosphate. Residue Cys154 is part of the active site. Residue 163 to 168 (NVTDVK) participates in ATP binding. Beta-D-fructose 6-phosphate is bound by residues Lys168, Arg190, and Tyr194. Residues 245 to 457 (PRSIYLTRHG…QLPLCDSPRD (213 aa)) form a fructose-2,6-bisphosphatase region. Beta-D-fructose 2,6-bisphosphate is bound at residue Arg252. Catalysis depends on His253, which acts as the Tele-phosphohistidine intermediate. Residues Asn259 and Gly265 each contribute to the beta-D-fructose 2,6-bisphosphate site. The Proton donor/acceptor role is filled by Glu324. Positions 335, 349, 353, 364, 390, and 394 each coordinate beta-D-fructose 2,6-bisphosphate. Position 346–349 (346–349 (ADDR)) interacts with ATP. ATP is bound by residues 390–394 (QAVLR) and Tyr426.

In the C-terminal section; belongs to the phosphoglycerate mutase family.

It carries out the reaction beta-D-fructose 2,6-bisphosphate + H2O = beta-D-fructose 6-phosphate + phosphate. The catalysed reaction is beta-D-fructose 6-phosphate + ATP = beta-D-fructose 2,6-bisphosphate + ADP + H(+). Functionally, synthesis and degradation of fructose 2,6-bisphosphate. In Caenorhabditis elegans, this protein is 6-phosphofructo-2-kinase/fructose-2,6-bisphosphatase.